The chain runs to 282 residues: ATP phosphoribosyltransferase (282 aa).

The protein belongs to the ATP phosphoribosyltransferase family. Long subfamily. Mg(2+) serves as cofactor.

Its subcellular location is the cytoplasm. It carries out the reaction 1-(5-phospho-beta-D-ribosyl)-ATP + diphosphate = 5-phospho-alpha-D-ribose 1-diphosphate + ATP. Its pathway is amino-acid biosynthesis; L-histidine biosynthesis; L-histidine from 5-phospho-alpha-D-ribose 1-diphosphate: step 1/9. Its activity is regulated as follows. Feedback inhibited by histidine. In terms of biological role, catalyzes the condensation of ATP and 5-phosphoribose 1-diphosphate to form N'-(5'-phosphoribosyl)-ATP (PR-ATP). Has a crucial role in the pathway because the rate of histidine biosynthesis seems to be controlled primarily by regulation of HisG enzymatic activity. The polypeptide is ATP phosphoribosyltransferase (Saccharopolyspora erythraea (strain ATCC 11635 / DSM 40517 / JCM 4748 / NBRC 13426 / NCIMB 8594 / NRRL 2338)).